Consider the following 509-residue polypeptide: Photosystem II CP47 reaction center protein (509 aa).

The next 6 helical transmembrane spans lie at 21 to 36, 101 to 115, 140 to 156, 203 to 218, 237 to 252, and 457 to 472; these read AVHL…WAGS, IGLS…IWHW, GIHL…FGAF, IAAG…FHLS, VLSS…AFIV, and SFAL…HGGR.

It belongs to the PsbB/PsbC family. PsbB subfamily. As to quaternary structure, PSII is composed of 1 copy each of membrane proteins PsbA, PsbB, PsbC, PsbD, PsbE, PsbF, PsbH, PsbI, PsbJ, PsbK, PsbL, PsbM, PsbT, PsbX, PsbY, PsbZ, Psb30/Ycf12, at least 3 peripheral proteins of the oxygen-evolving complex and a large number of cofactors. It forms dimeric complexes. Requires Binds multiple chlorophylls. PSII binds additional chlorophylls, carotenoids and specific lipids. as cofactor.

Its subcellular location is the plastid. It is found in the cyanelle thylakoid membrane. Its function is as follows. One of the components of the core complex of photosystem II (PSII). It binds chlorophyll and helps catalyze the primary light-induced photochemical processes of PSII. PSII is a light-driven water:plastoquinone oxidoreductase, using light energy to abstract electrons from H(2)O, generating O(2) and a proton gradient subsequently used for ATP formation. The chain is Photosystem II CP47 reaction center protein from Cyanophora paradoxa.